The chain runs to 338 residues: tRNA N6-adenosine threonylcarbamoyltransferase (338 aa).

The Fe cation site is built by H109 and H113. Substrate-binding positions include 132–136, D165, G178, and N277; that span reads AISGA. Residue D302 coordinates Fe cation.

It belongs to the KAE1 / TsaD family. Fe(2+) serves as cofactor.

It localises to the cytoplasm. It catalyses the reaction L-threonylcarbamoyladenylate + adenosine(37) in tRNA = N(6)-L-threonylcarbamoyladenosine(37) in tRNA + AMP + H(+). In terms of biological role, required for the formation of a threonylcarbamoyl group on adenosine at position 37 (t(6)A37) in tRNAs that read codons beginning with adenine. Is involved in the transfer of the threonylcarbamoyl moiety of threonylcarbamoyl-AMP (TC-AMP) to the N6 group of A37, together with TsaE and TsaB. TsaD likely plays a direct catalytic role in this reaction. The chain is tRNA N6-adenosine threonylcarbamoyltransferase from Chlamydia trachomatis serovar L2b (strain UCH-1/proctitis).